The sequence spans 218 residues: Ribose-5-phosphate isomerase A (218 aa).

Residues 28–31 (TGST), 81–84 (DGAD), and 94–97 (KGGG) contribute to the substrate site. The Proton acceptor role is filled by glutamate 103. Lysine 121 contacts substrate.

Belongs to the ribose 5-phosphate isomerase family. As to quaternary structure, homodimer.

It carries out the reaction aldehydo-D-ribose 5-phosphate = D-ribulose 5-phosphate. It participates in carbohydrate degradation; pentose phosphate pathway; D-ribose 5-phosphate from D-ribulose 5-phosphate (non-oxidative stage): step 1/1. In terms of biological role, catalyzes the reversible conversion of ribose-5-phosphate to ribulose 5-phosphate. In Aliivibrio fischeri (strain ATCC 700601 / ES114) (Vibrio fischeri), this protein is Ribose-5-phosphate isomerase A.